Here is a 279-residue protein sequence, read N- to C-terminus: Urease accessory protein UreD (279 aa).

Belongs to the UreD family. UreD, UreF and UreG form a complex that acts as a GTP-hydrolysis-dependent molecular chaperone, activating the urease apoprotein by helping to assemble the nickel containing metallocenter of UreC. The UreE protein probably delivers the nickel.

It is found in the cytoplasm. In terms of biological role, required for maturation of urease via the functional incorporation of the urease nickel metallocenter. This is Urease accessory protein UreD from Streptococcus thermophilus (strain ATCC BAA-250 / LMG 18311).